Here is a 414-residue protein sequence, read N- to C-terminus: Serine/threonine transporter SstT (414 aa).

8 helical membrane passes run 16–36 (GSLV…AWVS), 46–66 (LGTL…LMLV), 84–104 (ILFL…VFSF), 143–163 (ALLN…GFAL), 180–200 (AVTF…FGLV), 219–239 (LVVL…LLVF), 300–320 (MAGA…TLGV), and 332–352 (VVAS…LLLI).

The protein belongs to the dicarboxylate/amino acid:cation symporter (DAACS) (TC 2.A.23) family.

It localises to the cell inner membrane. It catalyses the reaction L-serine(in) + Na(+)(in) = L-serine(out) + Na(+)(out). It carries out the reaction L-threonine(in) + Na(+)(in) = L-threonine(out) + Na(+)(out). Functionally, involved in the import of serine and threonine into the cell, with the concomitant import of sodium (symport system). The sequence is that of Serine/threonine transporter SstT from Salmonella arizonae (strain ATCC BAA-731 / CDC346-86 / RSK2980).